The primary structure comprises 131 residues: Small ribosomal subunit protein uS9 (131 aa).

This sequence belongs to the universal ribosomal protein uS9 family.

This Mesoplasma florum (strain ATCC 33453 / NBRC 100688 / NCTC 11704 / L1) (Acholeplasma florum) protein is Small ribosomal subunit protein uS9.